We begin with the raw amino-acid sequence, 163 residues long: Nucleotide-binding protein YajQ (163 aa).

It belongs to the YajQ family.

Functionally, nucleotide-binding protein. The polypeptide is Nucleotide-binding protein YajQ (Shigella flexneri).